Reading from the N-terminus, the 186-residue chain is Holliday junction branch migration complex subunit RuvA (186 aa).

Residues methionine 1–lysine 63 form a domain I region. The domain II stretch occupies residues asparagine 64–serine 137. Residue serine 137 is a region of interest, flexible linker. A domain III region spans residues serine 137–asparagine 186.

Belongs to the RuvA family. As to quaternary structure, homotetramer. Forms an RuvA(8)-RuvB(12)-Holliday junction (HJ) complex. HJ DNA is sandwiched between 2 RuvA tetramers; dsDNA enters through RuvA and exits via RuvB. An RuvB hexamer assembles on each DNA strand where it exits the tetramer. Each RuvB hexamer is contacted by two RuvA subunits (via domain III) on 2 adjacent RuvB subunits; this complex drives branch migration. In the full resolvosome a probable DNA-RuvA(4)-RuvB(12)-RuvC(2) complex forms which resolves the HJ.

The protein localises to the cytoplasm. Its function is as follows. The RuvA-RuvB-RuvC complex processes Holliday junction (HJ) DNA during genetic recombination and DNA repair, while the RuvA-RuvB complex plays an important role in the rescue of blocked DNA replication forks via replication fork reversal (RFR). RuvA specifically binds to HJ cruciform DNA, conferring on it an open structure. The RuvB hexamer acts as an ATP-dependent pump, pulling dsDNA into and through the RuvAB complex. HJ branch migration allows RuvC to scan DNA until it finds its consensus sequence, where it cleaves and resolves the cruciform DNA. This is Holliday junction branch migration complex subunit RuvA from Mycoplasma mycoides subsp. mycoides SC (strain CCUG 32753 / NCTC 10114 / PG1).